The sequence spans 135 residues: Photosystem II extrinsic protein U (135 aa).

Residues 1 to 29 (MKRLLSWLTGALVMASLMAGLVMPSSVYA) form the signal peptide.

The protein belongs to the PsbU family. In terms of assembly, PSII is composed of 1 copy each of membrane proteins PsbA, PsbB, PsbC, PsbD, PsbE, PsbF, PsbH, PsbI, PsbJ, PsbK, PsbL, PsbM, PsbT, PsbX, PsbY, PsbZ, Psb30/Ycf12, peripheral proteins PsbO, CyanoQ (PsbQ), PsbU, PsbV and a large number of cofactors. It forms dimeric complexes.

It localises to the cellular thylakoid membrane. In terms of biological role, one of the extrinsic, lumenal subunits of photosystem II (PSII). PSII is a light-driven water plastoquinone oxidoreductase, using light energy to abstract electrons from H(2)O, generating a proton gradient subsequently used for ATP formation. The extrinsic proteins stabilize the structure of photosystem II oxygen-evolving complex (OEC), the ion environment of oxygen evolution and protect the OEC against heat-induced inactivation. The sequence is that of Photosystem II extrinsic protein U from Synechococcus sp. (strain CC9605).